Here is a 334-residue protein sequence, read N- to C-terminus: DNA polymerase beta (334 aa).

The K(+) site is built by lysine 60, leucine 62, and valine 65. Positions 60, 62, and 65 each coordinate Na(+). Lysine 72 serves as the catalytic Nucleophile; Schiff-base intermediate with DNA; for 5'-dRP lyase activity. Arginine 83 carries the post-translational modification Omega-N-methylarginine; by PRMT6. Residues threonine 101, valine 103, and isoleucine 106 each coordinate K(+). Threonine 101, valine 103, and isoleucine 106 together coordinate Na(+). Arginine 149 lines the a 2'-deoxyribonucleoside 5'-triphosphate pocket. Omega-N-methylarginine; by PRMT6 is present on arginine 152. A 2'-deoxyribonucleoside 5'-triphosphate contacts are provided by serine 180, arginine 183, glycine 189, and aspartate 190. The interval 183 to 192 (RGAESSGDMD) is DNA-binding. The Mg(2+) site is built by aspartate 190, aspartate 192, and aspartate 255.

This sequence belongs to the DNA polymerase type-X family. As to quaternary structure, monomer. Requires Mg(2+) as cofactor. Methylation by PRMT6 stimulates the polymerase activity by enhancing DNA binding and processivity. Post-translationally, ubiquitinated: monoubiquitinated by huwe1/arf-bp1. Monoubiquitinated protein is then the target of stub1/chip, which catalyzes polyubiquitination from monoubiquitin, leading to degradation by the proteasome. usp47 mediates the deubiquitination of monoubiquitinated protein, preventing polyubiquitination by STUB1/CHIP and its subsequent degradation.

It is found in the nucleus. The protein localises to the cytoplasm. It carries out the reaction DNA(n) + a 2'-deoxyribonucleoside 5'-triphosphate = DNA(n+1) + diphosphate. The enzyme catalyses a 5'-end 2'-deoxyribose-2'-deoxyribonucleotide-DNA = (2E,4S)-4-hydroxypenten-2-al-5-phosphate + a 5'-end 5'-phospho-2'-deoxyribonucleoside-DNA + H(+). The catalysed reaction is 2'-deoxyribonucleotide-(2'-deoxyribose 5'-phosphate)-2'-deoxyribonucleotide-DNA = a 3'-end 2'-deoxyribonucleotide-(2,3-dehydro-2,3-deoxyribose 5'-phosphate)-DNA + a 5'-end 5'-phospho-2'-deoxyribonucleoside-DNA + H(+). Repair polymerase that plays a key role in base-excision repair. During this process, the damaged base is excised by specific DNA glycosylases, the DNA backbone is nicked at the abasic site by an apurinic/apyrimidic (AP) endonuclease, and POLB removes 5'-deoxyribose-phosphate from the preincised AP site acting as a 5'-deoxyribose-phosphate lyase (5'-dRP lyase); through its DNA polymerase activity, it adds one nucleotide to the 3' end of the arising single-nucleotide gap. Conducts 'gap-filling' DNA synthesis in a stepwise distributive fashion rather than in a processive fashion as for other DNA polymerases. It is also able to cleave sugar-phosphate bonds 3' to an intact AP site, acting as an AP lyase. The polypeptide is DNA polymerase beta (polb) (Xenopus laevis (African clawed frog)).